The chain runs to 155 residues: Large ribosomal subunit protein uL22c (155 aa).

The protein belongs to the universal ribosomal protein uL22 family. As to quaternary structure, part of the 50S ribosomal subunit.

The protein resides in the plastid. It localises to the chloroplast. Its function is as follows. This protein binds specifically to 23S rRNA. The globular domain of the protein is located near the polypeptide exit tunnel on the outside of the subunit, while an extended beta-hairpin is found that lines the wall of the exit tunnel in the center of the 70S ribosome. The protein is Large ribosomal subunit protein uL22c (rpl22) of Coffea arabica (Arabian coffee).